We begin with the raw amino-acid sequence, 218 residues long: 7-cyano-7-deazaguanine synthase (218 aa).

11–21 (LSGGMDSATLL) serves as a coordination point for ATP. Zn(2+) contacts are provided by C193, C201, C204, and C207.

The protein belongs to the QueC family. Requires Zn(2+) as cofactor.

It catalyses the reaction 7-carboxy-7-deazaguanine + NH4(+) + ATP = 7-cyano-7-deazaguanine + ADP + phosphate + H2O + H(+). It functions in the pathway purine metabolism; 7-cyano-7-deazaguanine biosynthesis. In terms of biological role, catalyzes the ATP-dependent conversion of 7-carboxy-7-deazaguanine (CDG) to 7-cyano-7-deazaguanine (preQ(0)). The sequence is that of 7-cyano-7-deazaguanine synthase from Aquifex aeolicus (strain VF5).